The sequence spans 130 residues: MARVKRAVNAQKKRRTLLATASGYRGQRSRLYRKAKEQVLHSMQYSYRDRRDRKGDFRQLWIQRINAGARANGLTYNRLIQGLKLAGVEVDRKILADLAVNDAAAFAAIVELARAAVAEQGTGGAASQAA.

Belongs to the bacterial ribosomal protein bL20 family.

In terms of biological role, binds directly to 23S ribosomal RNA and is necessary for the in vitro assembly process of the 50S ribosomal subunit. It is not involved in the protein synthesizing functions of that subunit. This chain is Large ribosomal subunit protein bL20, found in Salinispora arenicola (strain CNS-205).